An 840-amino-acid chain; its full sequence is Probable sulfate permease C869.05c (840 aa).

Helical transmembrane passes span 120–140 (WLINDLIAGITVGCVVVPQGM), 148–168 (LPSEYGLYSSFVGVAIYCFFA), 173–193 (VSIGPVAVMSLITAKVIANVM), 208–228 (LALLAGAITCGIGLLRLGFII), 230–250 (FIPVPAVAGFTTGSALNILSG), 278–298 (LPDTTVDAAFGLVSLFILFFT), 315–335 (AFFLTNTLRSAVVVIVGTAIS), 410–430 (LIAMGVTNLIGIFFNAYPATG), 447–467 (IAGIFTAAVVILSLYCLTDAF), 470–490 (IPNAILSAVIIHAVTDLILPM), 505–525 (CIFFISVIVSVFSSIENGIYV), and 527–547 (VCLAAALLLLRIAKPHGSFLG). The region spanning 578–733 (NLEIQSPPPG…CVEVAAPLRD (156 aa)) is the STAS domain. At Ser823 the chain carries Phosphoserine.

The protein belongs to the SLC26A/SulP transporter (TC 2.A.53) family.

It localises to the membrane. Functionally, high affinity uptake of sulfate into the cell. In Schizosaccharomyces pombe (strain 972 / ATCC 24843) (Fission yeast), this protein is Probable sulfate permease C869.05c.